We begin with the raw amino-acid sequence, 184 residues long: Photosystem I assembly protein Ycf4 (184 aa).

A run of 2 helical transmembrane segments spans residues 21 to 43 (NFFW…SSSY) and 58 to 80 (VFIP…GFYL).

Belongs to the Ycf4 family.

It is found in the plastid. The protein localises to the chloroplast thylakoid membrane. Its function is as follows. Seems to be required for the assembly of the photosystem I complex. The protein is Photosystem I assembly protein Ycf4 of Psilotum nudum (Whisk fern).